Consider the following 424-residue polypeptide: Inositol phosphosphingolipids phospholipase C (424 aa).

Mg(2+) is bound at residue Glu-49. His-289 acts as the Proton acceptor in catalysis. 2 consecutive transmembrane segments (helical) span residues Leu-335 to Cys-357 and Val-364 to Leu-386.

The protein belongs to the neutral sphingomyelinase family. The cofactor is Mg(2+).

The protein resides in the cell membrane. The protein localises to the endoplasmic reticulum membrane. The protein operates within lipid metabolism; sphingolipid metabolism. Its function is as follows. Inositol phosphosphingolipids phospholipase essential for the coordination of cell wall formation. Responsible for the hydrolysis of the phosphosphingolipids (IPS), inositol phosphorylceramide (IPC), mannosylinositol phosphorylceramide (MIPC), and mannosyldiinositol phosphorylceramide (M(IP)2C). The polypeptide is Inositol phosphosphingolipids phospholipase C (css1) (Schizosaccharomyces pombe (strain 972 / ATCC 24843) (Fission yeast)).